The sequence spans 37 residues: Large ribosomal subunit protein bL36 (37 aa).

The protein belongs to the bacterial ribosomal protein bL36 family.

This is Large ribosomal subunit protein bL36 from Mycobacterium ulcerans (strain Agy99).